The sequence spans 131 residues: Glycine cleavage system H protein (131 aa).

Positions 24–106 constitute a Lipoyl-binding domain; the sequence is TLRVGITDYA…YGEGWLVDLQ (83 aa). N6-lipoyllysine is present on Lys65.

This sequence belongs to the GcvH family. The glycine cleavage system is composed of four proteins: P, T, L and H. (R)-lipoate is required as a cofactor.

The glycine cleavage system catalyzes the degradation of glycine. The H protein shuttles the methylamine group of glycine from the P protein to the T protein. The sequence is that of Glycine cleavage system H protein from Mycobacterium sp. (strain JLS).